The chain runs to 331 residues: Ferredoxin--NADP reductase 2 (331 aa).

FAD contacts are provided by glutamate 37, glutamine 45, tyrosine 50, valine 90, phenylalanine 124, aspartate 286, and threonine 327.

Belongs to the ferredoxin--NADP reductase type 2 family. As to quaternary structure, homodimer. The cofactor is FAD.

The enzyme catalyses 2 reduced [2Fe-2S]-[ferredoxin] + NADP(+) + H(+) = 2 oxidized [2Fe-2S]-[ferredoxin] + NADPH. This chain is Ferredoxin--NADP reductase 2, found in Listeria monocytogenes serovar 1/2a (strain ATCC BAA-679 / EGD-e).